Here is a 959-residue protein sequence, read N- to C-terminus: rDNA transcriptional regulator pol5 (959 aa).

Phosphoserine is present on residues S742 and S743. The segment at 936–959 (HQQTSTAASSPQKTGHHENEKTNH) is disordered. The span at 937–948 (QQTSTAASSPQK) shows a compositional bias: polar residues. The segment covering 950-959 (GHHENEKTNH) has biased composition (basic and acidic residues).

It belongs to the MYBBP1A family. Interacts with cdc10.

Its subcellular location is the nucleus. Functionally, plays an important role in the regulation of rRNA transcription. Binds to rDNA promoter fragments. This is rDNA transcriptional regulator pol5 (pol5) from Schizosaccharomyces pombe (strain 972 / ATCC 24843) (Fission yeast).